An 837-amino-acid polypeptide reads, in one-letter code: Semaphorin-4B (837 aa).

Positions methionine 1–alanine 43 are cleaved as a signal peptide. Topologically, residues leucine 44–glutamate 717 are extracellular. Residues arginine 47–methionine 523 enclose the Sema domain. Asparagine 69 and asparagine 96 each carry an N-linked (GlcNAc...) asparagine glycan. Intrachain disulfides connect cysteine 120–cysteine 131 and cysteine 149–cysteine 158. N-linked (GlcNAc...) asparagine glycosylation is present at asparagine 165. 2 disulfides stabilise this stretch: cysteine 286-cysteine 399 and cysteine 310-cysteine 359. Asparagine 410 and asparagine 525 each carry an N-linked (GlcNAc...) asparagine glycan. The 55-residue stretch at asparagine 525–serine 579 folds into the PSI domain. 2 disulfide bridges follow: cysteine 526-cysteine 543 and cysteine 611-cysteine 656. One can recognise an Ig-like C2-type domain in the interval asparagine 604–phenylalanine 663. The N-linked (GlcNAc...) asparagine glycan is linked to asparagine 630. Residues phenylalanine 718–tyrosine 738 traverse the membrane as a helical segment. Over arginine 739–valine 837 the chain is Cytoplasmic. Residues proline 767–lysine 805 are disordered. Serine 793, serine 818, and serine 830 each carry phosphoserine.

The protein belongs to the semaphorin family.

The protein resides in the membrane. Its function is as follows. Inhibits axonal extension by providing local signals to specify territories inaccessible for growing axons. The chain is Semaphorin-4B from Homo sapiens (Human).